Reading from the N-terminus, the 360-residue chain is Photosystem II protein D1 (360 aa).

3 helical membrane-spanning segments follow: residues 29 to 46 (YIGWFGVLMIPCLLTATC), 118 to 133 (HFLIGVASYMGREWEL), and 142 to 156 (WICVAFSAPVAAATA). H118 is a chlorophyll a binding site. Y126 serves as a coordination point for pheophytin a. [CaMn4O5] cluster is bound by residues D170 and E189. The helical transmembrane segment at 197-218 (FHMAGVAGVFGGALFSAMHGSL) threads the bilayer. Residue H198 participates in chlorophyll a binding. A quinone-binding positions include H215 and 264–265 (SF). Fe cation is bound at residue H215. Fe cation is bound at residue H272. The chain crosses the membrane as a helical span at residues 274–288 (FLGAWPVVGIWLTAI). [CaMn4O5] cluster-binding residues include H332, E333, D342, and A344. The propeptide occupies 345 to 360 (SNSVVPVALTAPSVEA).

Belongs to the reaction center PufL/M/PsbA/D family. In terms of assembly, PSII is composed of 1 copy each of membrane proteins PsbA, PsbB, PsbC, PsbD, PsbE, PsbF, PsbH, PsbI, PsbJ, PsbK, PsbL, PsbM, PsbT, PsbX, PsbY, PsbZ, Psb30/Ycf12, at least 3 peripheral proteins of the oxygen-evolving complex and a large number of cofactors. It forms dimeric complexes. It depends on The D1/D2 heterodimer binds P680, chlorophylls that are the primary electron donor of PSII, and subsequent electron acceptors. It shares a non-heme iron and each subunit binds pheophytin, quinone, additional chlorophylls, carotenoids and lipids. D1 provides most of the ligands for the Mn4-Ca-O5 cluster of the oxygen-evolving complex (OEC). There is also a Cl(-1) ion associated with D1 and D2, which is required for oxygen evolution. The PSII complex binds additional chlorophylls, carotenoids and specific lipids. as a cofactor. In terms of processing, tyr-161 forms a radical intermediate that is referred to as redox-active TyrZ, YZ or Y-Z. Post-translationally, C-terminally processed by CTPA; processing is essential to allow assembly of the oxygen-evolving complex and thus photosynthetic growth.

Its subcellular location is the plastid. It localises to the chloroplast thylakoid membrane. The enzyme catalyses 2 a plastoquinone + 4 hnu + 2 H2O = 2 a plastoquinol + O2. Its function is as follows. Photosystem II (PSII) is a light-driven water:plastoquinone oxidoreductase that uses light energy to abstract electrons from H(2)O, generating O(2) and a proton gradient subsequently used for ATP formation. It consists of a core antenna complex that captures photons, and an electron transfer chain that converts photonic excitation into a charge separation. The D1/D2 (PsbA/PsbD) reaction center heterodimer binds P680, the primary electron donor of PSII as well as several subsequent electron acceptors. The sequence is that of Photosystem II protein D1 from Cyanidioschyzon merolae (strain NIES-3377 / 10D) (Unicellular red alga).